The sequence spans 83 residues: Probable calcium-binding protein CML28 (83 aa).

EF-hand domains follow at residues 5–40 (TEKA…LGSV) and 43–75 (EDIK…NRGL). Ca(2+) is bound by residues Asp18, Asn20, Asp22, Lys24, Glu29, Asp53, Asp55, Asp57, Tyr59, and Glu64.

Its function is as follows. Potential calcium sensor. The polypeptide is Probable calcium-binding protein CML28 (CML28) (Arabidopsis thaliana (Mouse-ear cress)).